We begin with the raw amino-acid sequence, 101 residues long: Small ribosomal subunit protein uS14 (101 aa).

The protein belongs to the universal ribosomal protein uS14 family. In terms of assembly, part of the 30S ribosomal subunit. Contacts proteins S3 and S10.

Functionally, binds 16S rRNA, required for the assembly of 30S particles and may also be responsible for determining the conformation of the 16S rRNA at the A site. This chain is Small ribosomal subunit protein uS14, found in Shewanella frigidimarina (strain NCIMB 400).